We begin with the raw amino-acid sequence, 39 residues long: RapF inhibitor (39 aa).

The propeptide occupies 1 to 34 (MKLKSKLLLSCLALSTVFVATTIANAPTHQIEVA).

This sequence belongs to the Phr family. In terms of assembly, interacts with RapF and inhibits its interaction with ComA. In terms of processing, contains a predicted signal peptide cleavage site in the N-terminal region, however the propeptide is probably subject to only one processing event, at the N-terminal end of the mature peptide.

The protein localises to the secreted. It localises to the cytoplasm. In terms of biological role, signaling molecule involved in the regulation of genetic competence development. Secreted during production, but the mature peptide acts intracellularly, indicating that it needs to be imported into the cell to function. Stimulates expression of the genes controlled by ComA, a transcriptional factor that regulates the development of genetic competence. Acts by inhibiting RapF, which regulates the activity of ComA. This is RapF inhibitor (phrF) from Bacillus subtilis (strain 168).